The primary structure comprises 535 residues: CTP synthase (535 aa).

The interval Met1–Leu267 is amidoligase domain. Ser13 provides a ligand contact to CTP. Ser13 is a binding site for UTP. Position 14-19 (Ser14–Ile19) interacts with ATP. Residue Tyr54 coordinates L-glutamine. ATP is bound at residue Asp71. Mg(2+) contacts are provided by Asp71 and Glu141. Residues Asp148–Glu150, Lys188–Gln193, and Lys224 each bind CTP. UTP contacts are provided by residues Lys188–Gln193 and Lys224. ATP is bound at residue Arg240 to Ala242. The Glutamine amidotransferase type-1 domain occupies Lys292–Ser534. Gly354 contacts L-glutamine. Cys381 functions as the Nucleophile; for glutamine hydrolysis in the catalytic mechanism. Residues Leu382–Gln385, Glu405, and Arg462 each bind L-glutamine. Residues His507 and Glu509 contribute to the active site.

It belongs to the CTP synthase family. As to quaternary structure, homotetramer.

It carries out the reaction UTP + L-glutamine + ATP + H2O = CTP + L-glutamate + ADP + phosphate + 2 H(+). It catalyses the reaction L-glutamine + H2O = L-glutamate + NH4(+). The catalysed reaction is UTP + NH4(+) + ATP = CTP + ADP + phosphate + 2 H(+). Its pathway is pyrimidine metabolism; CTP biosynthesis via de novo pathway; CTP from UDP: step 2/2. Its activity is regulated as follows. Allosterically activated by GTP, when glutamine is the substrate; GTP has no effect on the reaction when ammonia is the substrate. The allosteric effector GTP functions by stabilizing the protein conformation that binds the tetrahedral intermediate(s) formed during glutamine hydrolysis. Inhibited by the product CTP, via allosteric rather than competitive inhibition. Functionally, catalyzes the ATP-dependent amination of UTP to CTP with either L-glutamine or ammonia as the source of nitrogen. Regulates intracellular CTP levels through interactions with the four ribonucleotide triphosphates. This Bacillus cereus (strain AH820) protein is CTP synthase.